A 352-amino-acid chain; its full sequence is Probable cytosolic iron-sulfur protein assembly protein CIAO1 homolog (352 aa).

7 WD repeats span residues 14 to 53 (GHDD…PSEQ), 63 to 102 (CHTR…WEQV), 107 to 146 (GHEN…EFEC), 152 to 191 (GHSQ…WGCA), 200 to 240 (GHES…TSTP), 268 to 306 (HHRR…LTQP), and 319 to 352 (AHGA…WWLR).

The protein belongs to the WD repeat CIA1 family.

Its function is as follows. Essential component of the cytosolic iron-sulfur (Fe/S) protein assembly machinery. Required for the maturation of extramitochondrial Fe/S proteins. The sequence is that of Probable cytosolic iron-sulfur protein assembly protein CIAO1 homolog from Chlamydomonas reinhardtii (Chlamydomonas smithii).